The sequence spans 260 residues: Acyl-coenzyme A diphosphatase FITM2 (260 aa).

The Cytoplasmic segment spans residues 1-23; sequence MERLENCAQMFQRKFLNEAFRRH. A helical transmembrane segment spans residues 24 to 44; sequence CPVLLACIALGGSLLKELSPL. Over 45-57 the chain is Lumenal; that stretch reads PDSYWNNKRNVLN. Residues 58 to 78 traverse the membrane as a helical segment; sequence VYFVKFCWGWTLWLLLPFITL. The Cytoplasmic portion of the chain corresponds to 79-93; sequence TNYKLTGSITKVLRR. The chain crosses the membrane as a helical span at residues 94–114; it reads LSSLLVGTLFWYLCTNLFLYI. The Lumenal segment spans residues 115 to 144; that stretch reads EHITGSCYESEALLDSIEHQDRKECRLHGG. Residues 145–165 traverse the membrane as a helical segment; it reads FWHGFDISGHCFLLSYCILII. The active site involves H154. The Cytoplasmic segment spans residues 166-189; the sequence is LEETSVIRSIQFERHWHRMAINAQ. 2 helical membrane-spanning segments follow: residues 190–210 and 211–231; these read FTAL…TAVY and FHNI…WYIT. H212 is an active-site residue. Residues 232 to 260 are Cytoplasmic-facing; it reads YRWWYLQPISPGLPPASASHSEKEPVYKN.

Belongs to the FIT family. FIT2 subfamily.

It localises to the endoplasmic reticulum membrane. The catalysed reaction is an acyl-CoA + H2O = an acyl-4'-phosphopantetheine + adenosine 3',5'-bisphosphate + 2 H(+). In terms of biological role, fatty acyl-coenzyme A (CoA) diphosphatase that hydrolyzes fatty acyl-CoA to yield acyl-4'-phosphopantetheine and adenosine 3',5'-bisphosphate. Preferentially hydrolyzes unsaturated long-chain acyl-CoA substrates in the endoplasmic reticulum (ER) lumen. This catalytic activity is required for maintaining ER structure and for lipid droplets (LDs) biogenesis, which are lipid storage organelles involved in maintaining lipid and energy homeostasis. May directly bind to diacylglycerol (DAGs) and triacylglycerol, which is also important for LD biogenesis. May support directional budding of nacent LDs from the ER into the cytosol by reducing DAG levels at sites of LD formation. May play a role in the regulation of cell morphology, ER morphology and cytoskeletal organization. This is Acyl-coenzyme A diphosphatase FITM2 from Xenopus laevis (African clawed frog).